We begin with the raw amino-acid sequence, 188 residues long: Murein DD-endopeptidase MepS/Murein LD-carboxypeptidase (188 aa).

An N-terminal signal peptide occupies residues 1 to 26; it reads MVKSQPILRYILRGIPAIAVAVLLSA. Cys27 carries N-palmitoyl cysteine lipidation. Cys27 carries S-diacylglycerol cysteine lipidation. Positions 64–185 constitute a NlpC/P60 domain; sequence VDVKSRIMDQ…KRYNEARRVL (122 aa). The active-site Nucleophile is the Cys94. His145 acts as the Proton acceptor in catalysis. His157 is an active-site residue.

The protein belongs to the peptidase C40 family. In terms of assembly, monomer.

It is found in the cell outer membrane. It carries out the reaction N-acetyl-D-glucosaminyl-N-acetylmuramoyl-L-alanyl-meso-2,6-diaminoheptanedioyl-D-alanine + H2O = N-acetyl-D-glucosaminyl-N-acetylmuramoyl-L-alanyl-meso-2,6-diaminoheptanedioate + D-alanine. It functions in the pathway cell wall biogenesis; cell wall polysaccharide biosynthesis. Its function is as follows. A murein DD-endopeptidase with specificity for D-Ala-meso-diaminopimelic acid (mDAP) cross-links. Its role is probably to cleave D-Ala-mDAP cross-links to allow insertion of new glycans and thus cell wall expansion. Functionally redundant with MepM and MepH. Also has weak LD-carboxypeptidase activity on L-mDAP-D-Ala peptide bonds. The sequence is that of Murein DD-endopeptidase MepS/Murein LD-carboxypeptidase (mepS) from Escherichia coli O157:H7.